A 200-amino-acid chain; its full sequence is HTH-type transcriptional regulator BetI (200 aa).

Residues 8 to 68 enclose the HTH tetR-type domain; sequence SIRKQQLIQA…AAMRHIQYQL (61 aa). Residues 31–50 constitute a DNA-binding region (H-T-H motif); that stretch reads SIALIARKAGVSNGIISHYF.

Its pathway is amine and polyamine biosynthesis; betaine biosynthesis via choline pathway [regulation]. Functionally, repressor involved in the biosynthesis of the osmoprotectant glycine betaine. It represses transcription of the choline transporter BetT and the genes of BetAB involved in the synthesis of glycine betaine. In Proteus mirabilis (strain HI4320), this protein is HTH-type transcriptional regulator BetI.